A 685-amino-acid chain; its full sequence is Acetate--CoA ligase [ADP-forming] I (685 aa).

Positions 477–513 (LPVLEAYGIEVAPYGIARNVDEARDIAESIGYPVVLK) constitute an ATP-grasp domain. 503–514 (AESIGYPVVLKV) provides a ligand contact to ATP.

In the N-terminal section; belongs to the acetate CoA ligase alpha subunit family. It in the C-terminal section; belongs to the acetate CoA ligase beta subunit family. Homodimer.

The catalysed reaction is acetate + ATP + CoA = acetyl-CoA + ADP + phosphate. Activity requires divalent metal cations. Functionally, catalyzes the reversible formation of acetate and ATP from acetyl-CoA by using ADP and phosphate. Can use other substrates such as propionyl-CoA and butyryl-CoA, but not phenylacetyl-CoA. Seems to be involved primarily in the conversion of acetyl-CoA to acetate. Participates in the degradation of branched-chain amino acids via branched-chain-acyl-CoA esters. The protein is Acetate--CoA ligase [ADP-forming] I of Archaeoglobus fulgidus (strain ATCC 49558 / DSM 4304 / JCM 9628 / NBRC 100126 / VC-16).